The primary structure comprises 399 residues: tRNA-specific 2-thiouridylase MnmA (399 aa).

ATP contacts are provided by residues 7 to 14 (AMSGGVDS) and Met-33. Cys-128 functions as the Nucleophile in the catalytic mechanism. Cys-128 and Cys-224 are disulfide-bonded. ATP is bound at residue Gly-152. Positions 174-176 (KDQ) are interaction with tRNA. Cys-224 serves as the catalytic Cysteine persulfide intermediate. The segment at 333–334 (RY) is interaction with tRNA.

This sequence belongs to the MnmA/TRMU family.

Its subcellular location is the cytoplasm. The enzyme catalyses S-sulfanyl-L-cysteinyl-[protein] + uridine(34) in tRNA + AH2 + ATP = 2-thiouridine(34) in tRNA + L-cysteinyl-[protein] + A + AMP + diphosphate + H(+). Catalyzes the 2-thiolation of uridine at the wobble position (U34) of tRNA, leading to the formation of s(2)U34. This is tRNA-specific 2-thiouridylase MnmA from Rhodopirellula baltica (strain DSM 10527 / NCIMB 13988 / SH1).